The chain runs to 246 residues: Phycobilisome rod-core linker polypeptide CpcG2 (246 aa).

Positions 11 to 189 constitute a PBS-linker domain; the sequence is SSQNQRVAGY…YWRDKLENSR (179 aa). The segment at 224 to 246 is disordered; the sequence is DTTRRDRPTVPASINPTASFPLR. Polar residues predominate over residues 235 to 246; it reads ASINPTASFPLR.

Belongs to the phycobilisome linker protein family. The phycobilisome is a hemidiscoidal structure that is composed of two distinct substructures: a core complex and a number of rods radiating from the core.

It localises to the cellular thylakoid membrane. Rod-core linker protein required for attachment of phycocyanin to allophycocyanin in cores of phycobilisomes. In terms of biological role, linker polypeptides determine the state of aggregation and the location of the disk-shaped phycobiliprotein units within the phycobilisome and modulate their spectroscopic properties in order to mediate a directed and optimal energy transfer. This is Phycobilisome rod-core linker polypeptide CpcG2 (cpcG2) from Thermosynechococcus vestitus (strain NIES-2133 / IAM M-273 / BP-1).